Consider the following 163-residue polypeptide: Nitrogen regulatory protein (163 aa).

Residues 12-156 (SVLNRECTRS…EELYQIITDT (145 aa)) enclose the PTS EIIA type-2 domain. The active-site Tele-phosphohistidine intermediate is His73.

The protein resides in the cytoplasm. Functionally, seems to have a role in regulating nitrogen assimilation. The sequence is that of Nitrogen regulatory protein (ptsN) from Escherichia coli (strain K12).